A 330-amino-acid chain; its full sequence is T-cell leukemia homeobox protein 1 (330 aa).

The disordered stretch occupies residues 186–207 (DRFTGHPYQNRTPPKKKKPRTS). Residues 201–260 (KKKPRTSFTRLQICELEKRFHRQKYLASAERAALAKALKMTDAQVKTWFQNRRTKWRRQT) constitute a DNA-binding region (homeobox). K236 bears the N6-acetyllysine mark.

Interacts with MEIS1, MEIS2, PBX1, PBX2 and PBX3.

The protein localises to the nucleus. In terms of biological role, controls the genesis of the spleen. Binds to the DNA sequence 5'-GGCGGTAAGTGG-3'. The sequence is that of T-cell leukemia homeobox protein 1 (TLX1) from Homo sapiens (Human).